Reading from the N-terminus, the 368-residue chain is Glutamate 5-kinase (368 aa).

Lysine 9 is an ATP binding site. Substrate contacts are provided by serine 49, aspartate 136, and asparagine 148. Residues 168 to 169 and 210 to 216 each bind ATP; these read TD and TGGMMTK. Positions 275–353 constitute a PUA domain; sequence AGIITIDNGA…ADIENVLGYE (79 aa).

It belongs to the glutamate 5-kinase family.

Its subcellular location is the cytoplasm. It carries out the reaction L-glutamate + ATP = L-glutamyl 5-phosphate + ADP. It functions in the pathway amino-acid biosynthesis; L-proline biosynthesis; L-glutamate 5-semialdehyde from L-glutamate: step 1/2. Functionally, catalyzes the transfer of a phosphate group to glutamate to form L-glutamate 5-phosphate. The polypeptide is Glutamate 5-kinase (Haemophilus influenzae (strain ATCC 51907 / DSM 11121 / KW20 / Rd)).